Here is a 66-residue protein sequence, read N- to C-terminus: Small ribosomal subunit protein bS21 (66 aa).

It belongs to the bacterial ribosomal protein bS21 family.

This is Small ribosomal subunit protein bS21 from Rickettsia peacockii (strain Rustic).